We begin with the raw amino-acid sequence, 385 residues long: MVHPPPPPPRLLLVALVGLLSLREVVAEPAEEAGTPCPEGLWPVPPQVLPRVTYTQVSQGQAEGIAFFYHPCAHPWLKLQLALLAHLYVAKPTLIPDFSLTWDRPLVLTAWGTALELAWIEPAWVAHWLKRQRRRKQRKSVWFLSDNLFGPTPTMPASRRGKLCGRRCVQAPTLAFALRSWRPPGAQVTSRGSGRSSISVVKRRGLRAALGLQSTPPGLRVSLASSQSLKAQQLTLGTSSVAPVSLTTGGPGGNGRSRTEAQMPSGQGNHGGCACPGQVSPAPRAAGPPRVARGPTPRTEEAAWAAMALTFLLVLLTLATLCTRLHRNFRRSESIYWGPTADSQDTVAALLKRRLPLPSRRIKRSRRRPLLPPTPDSGPDSESSD.

A signal peptide spans 1–27 (MVHPPPPPPRLLLVALVGLLSLREVVA). Topologically, residues 28–301 (EPAEEAGTPC…ARGPTPRTEE (274 aa)) are extracellular. The tract at residues 242-297 (APVSLTTGGPGGNGRSRTEAQMPSGQGNHGGCACPGQVSPAPRAAGPPRVARGPTP) is disordered. Positions 281 to 297 (PAPRAAGPPRVARGPTP) are enriched in low complexity. The helical transmembrane segment at 302–322 (AAWAAMALTFLLVLLTLATLC) threads the bilayer. Residues 323-385 (TRLHRNFRRS…DSGPDSESSD (63 aa)) lie on the Cytoplasmic side of the membrane. Basic residues predominate over residues 359–369 (SRRIKRSRRRP). A disordered region spans residues 359 to 385 (SRRIKRSRRRPLLPPTPDSGPDSESSD).

It is found in the cell membrane. It localises to the cytoplasm. May act as a tumor suppressor. Inhibits tumor cell growth, when overexpressed. This is Tumor protein p53-inducible protein 13 (Tp53i13) from Mus musculus (Mouse).